Reading from the N-terminus, the 546-residue chain is Chaperonin GroEL 1 (546 aa).

ATP contacts are provided by residues threonine 30–proline 33, lysine 51, aspartate 87–threonine 91, glycine 415, asparagine 479–alanine 481, and aspartate 495.

It belongs to the chaperonin (HSP60) family. As to quaternary structure, forms a cylinder of 14 subunits composed of two heptameric rings stacked back-to-back. Interacts with the co-chaperonin GroES.

It is found in the cytoplasm. It catalyses the reaction ATP + H2O + a folded polypeptide = ADP + phosphate + an unfolded polypeptide.. Together with its co-chaperonin GroES, plays an essential role in assisting protein folding. The GroEL-GroES system forms a nano-cage that allows encapsulation of the non-native substrate proteins and provides a physical environment optimized to promote and accelerate protein folding. This chain is Chaperonin GroEL 1, found in Paraburkholderia xenovorans (strain LB400).